We begin with the raw amino-acid sequence, 278 residues long: Ribosomal protein L11 methyltransferase (278 aa).

S-adenosyl-L-methionine contacts are provided by Thr131, Gly152, Asp173, and Asn214.

It belongs to the methyltransferase superfamily. PrmA family.

It localises to the cytoplasm. The enzyme catalyses L-lysyl-[protein] + 3 S-adenosyl-L-methionine = N(6),N(6),N(6)-trimethyl-L-lysyl-[protein] + 3 S-adenosyl-L-homocysteine + 3 H(+). In terms of biological role, methylates ribosomal protein L11. The protein is Ribosomal protein L11 methyltransferase of Campylobacter lari (strain RM2100 / D67 / ATCC BAA-1060).